The sequence spans 116 residues: Ribonuclease P protein component (116 aa).

This sequence belongs to the RnpA family. Consists of a catalytic RNA component (M1 or rnpB) and a protein subunit.

The enzyme catalyses Endonucleolytic cleavage of RNA, removing 5'-extranucleotides from tRNA precursor.. RNaseP catalyzes the removal of the 5'-leader sequence from pre-tRNA to produce the mature 5'-terminus. It can also cleave other RNA substrates such as 4.5S RNA. The protein component plays an auxiliary but essential role in vivo by binding to the 5'-leader sequence and broadening the substrate specificity of the ribozyme. The polypeptide is Ribonuclease P protein component (Acholeplasma laidlawii (strain PG-8A)).